The primary structure comprises 424 residues: Neurotensin receptor type 1 (424 aa).

The interval 1–23 is disordered; that stretch reads MHLNSSVPQGTPGEPDAQPFSGP. The Extracellular portion of the chain corresponds to 1 to 68; sequence MHLNSSVPQG…TDIYSKVLVT (68 aa). N4, N38, and N42 each carry an N-linked (GlcNAc...) asparagine glycan. A helical membrane pass occupies residues 69 to 89; the sequence is AIYLALFVVGTVGNSVTAFTL. Topologically, residues 90-103 are cytoplasmic; it reads ARKKSLQSLQSTVH. The chain crosses the membrane as a helical span at residues 104–123; sequence YHLGSLALSDLLILLLAMPV. The Extracellular segment spans residues 124-143; the sequence is ELYNFIWVHHPWAFGDAGCR. Cysteines 142 and 225 form a disulfide. Residues 144 to 165 traverse the membrane as a helical segment; the sequence is GYYFLRDACTYATALNVASLSV. At 166–185 the chain is on the cytoplasmic side; that stretch reads ERYLAICHPFKAKTLMSRSR. A helical transmembrane segment spans residues 186-206; it reads TKKFISAIWLASALLAIPMLF. At 207–235 the chain is on the extracellular side; the sequence is TMGLQNRSGDGTHPGGLVCTPIVDTATVK. A helical membrane pass occupies residues 236-260; sequence VVIQVNTFMSFLFPMLVISILNTVI. Residues 261–308 lie on the Cytoplasmic side of the membrane; the sequence is ANKLTVMVHQAAEQGRVCTVGTHNGLEHSTFNMTIEPGRVQALRHGVL. The chain crosses the membrane as a helical span at residues 309–330; that stretch reads VLRAVVIAFVVCWLPYHVRRLM. Positions 326–349 are neurotensin binding; the sequence is VRRLMFCYISDEQWTTFLFDFYHY. At 331 to 348 the chain is on the extracellular side; sequence FCYISDEQWTTFLFDFYH. A helical transmembrane segment spans residues 349–369; it reads YFYMLTNALFYVSSAINPILY. Topologically, residues 370–424 are cytoplasmic; that stretch reads NLVSANFRQVFLSTLACLCPGWRHRRKKRPTFSRKPNSMSSNHAFSTSATRETLY. S-palmitoyl cysteine attachment occurs at residues C386 and C388. The tract at residues 397–424 is disordered; it reads KRPTFSRKPNSMSSNHAFSTSATRETLY. A compositionally biased stretch (polar residues) spans 403-424; that stretch reads RKPNSMSSNHAFSTSATRETLY.

Belongs to the G-protein coupled receptor 1 family. Neurotensin receptor subfamily. NTSR1 sub-subfamily. As to quaternary structure, interacts (palmitoylated form) with GNA11. Post-translationally, N-glycosylated. Palmitoylated; this is required for normal localization at membrane rafts and normal GNA11-mediated activation of down-stream signaling cascades. The palmitoylation level increases in response to neurotensin treatment. In terms of tissue distribution, detected in brain and small intestine.

The protein localises to the cell membrane. Its subcellular location is the membrane raft. Functionally, G-protein coupled receptor for the tridecapeptide neurotensin (NTS). Signaling is effected via G proteins that activate a phosphatidylinositol-calcium second messenger system. Signaling leads to the activation of downstream MAP kinases and protects cells against apoptosis. The protein is Neurotensin receptor type 1 (Ntsr1) of Rattus norvegicus (Rat).